Reading from the N-terminus, the 319-residue chain is Thioredoxin reductase 1 (319 aa).

Residues 11–14, 40–41, glutamine 45, asparagine 54, valine 87, cysteine 145, aspartate 288, and 295–297 contribute to the FAD site; these read SGPA, IA, and RQA. Cysteine 142 and cysteine 145 form a disulfide bridge. Phosphoserine is present on serine 303.

It belongs to the class-II pyridine nucleotide-disulfide oxidoreductase family. In terms of assembly, homodimer. FAD serves as cofactor.

Its subcellular location is the cytoplasm. The protein resides in the mitochondrion intermembrane space. The enzyme catalyses [thioredoxin]-dithiol + NADP(+) = [thioredoxin]-disulfide + NADPH + H(+). Functionally, central component in the thioredoxin system. Reduces thioredoxins 1 and 2. This is Thioredoxin reductase 1 (TRR1) from Saccharomyces cerevisiae (strain ATCC 204508 / S288c) (Baker's yeast).